Consider the following 393-residue polypeptide: MTPFHRLSRFFRQAPSPPRTPITSNFPILDSAVKIEEERMPAFDRGLFYPVKLGDVFRSRYQVLSKLGFGANSTVWFCRDLHQHRYIALKIYIRSSEVNREVQVLKHLSSVKTNHPGSSLVRKMIEEFEITGPSGSHQCIVYEPLLTSLLHFQATLKPQSLPEDLLKGALQQLLLALDYLHSEAHVIHTDDSIFREWDTSEEAEPSPRKVDSSHTIYKSRPFHRKKGWSGFGMPLLSDFGEARLGDVHDGSIQPDIYRAPEVILGMSWTSKVDIWNVGALIWDLFEDHHLFDGRGPNGDHSDAHLLAEMIAMLGPAPLNFLRKAPQSRKYWDSNGRWKGAIEVPQCSLEDSEEYLEGENKKMFMQFVRKMLRWDPEERQSAPELLTDPWLIAQ.

The Protein kinase domain occupies 61–390 (YQVLSKLGFG…APELLTDPWL (330 aa)). ATP is bound by residues 67–75 (LGFGANSTV) and lysine 90. Aspartate 190 serves as the catalytic Proton acceptor.

This sequence belongs to the protein kinase superfamily. CMGC Ser/Thr protein kinase family.

It carries out the reaction L-seryl-[protein] + ATP = O-phospho-L-seryl-[protein] + ADP + H(+). The catalysed reaction is L-threonyl-[protein] + ATP = O-phospho-L-threonyl-[protein] + ADP + H(+). Functionally, serine/threonine protein kinase; part of the subtelomeric hrmA-associated cluster (HAC) containing genes that alter the hyphal surface (such as reduced total chitin or increased beta-glucan exposure) and perturb inter-hyphal interactions within the developing biofilms, resulting in a loss of vertically aligned polarized growing filaments. Consequently, this hypoxia-typic morphotype (called H-MORPH) with altered biofilm architecture leads to increased hypoxia fitness, increased host inflammation, rapid disease progression, and mortality in a murine model of invasive aspergillosis. This Aspergillus fumigatus (strain CBS 144.89 / FGSC A1163 / CEA10) (Neosartorya fumigata) protein is Serine/threonine protein kinase AFUB_078980.